We begin with the raw amino-acid sequence, 68 residues long: Riparin-1.5 amide (68 aa).

An N-terminal signal peptide occupies residues 1-15; that stretch reads MKIIVVLAVLMLVSA. Positions 16–41 are excised as a propeptide; that stretch reads QVCLVSAAEMGHSSDNELSSRDLVKR. A disulfide bridge connects residues Cys-47 and Cys-53. The residue at position 53 (Cys-53) is a Cysteine amide. The propeptide occupies 57–68; the sequence is SIESSEGANGGE.

In terms of tissue distribution, expressed by the skin glands.

Its subcellular location is the secreted. In Crinia riparia (Streambank froglet), this protein is Riparin-1.5 amide.